The sequence spans 101 residues: Acid shock protein (101 aa).

Positions 1 to 21 (MKKVLALVVAAAMGLSSAAFA) are cleaved as a signal peptide. The propeptide occupies 22-59 (AETTATAAPAASTAAPAKTVHHKKHHKAAKPAAEQKAQ). Low complexity predominate over residues 26–39 (ATAAPAASTAAPAK). The tract at residues 26-101 (ATAAPAASTA…AAKPAAQPAA (76 aa)) is disordered. Basic residues-rich tracts occupy residues 40–50 (TVHHKKHHKAA), 60–69 (AAKKHHKKAA), and 79–88 (AAKKHHKKAA).

It belongs to the Asr family. Proteolytic processing gives rise to the active protein.

Its subcellular location is the periplasm. Its function is as follows. Required for growth and/or survival at acidic conditions. The protein is Acid shock protein (asr) of Enterobacter cloacae.